A 248-amino-acid polypeptide reads, in one-letter code: tRNA pseudouridine synthase A (248 aa).

The Nucleophile role is filled by aspartate 55. Tyrosine 114 is a substrate binding site.

It belongs to the tRNA pseudouridine synthase TruA family. In terms of assembly, homodimer.

It catalyses the reaction uridine(38/39/40) in tRNA = pseudouridine(38/39/40) in tRNA. Formation of pseudouridine at positions 38, 39 and 40 in the anticodon stem and loop of transfer RNAs. The sequence is that of tRNA pseudouridine synthase A from Rhodopseudomonas palustris (strain ATCC BAA-98 / CGA009).